A 96-amino-acid chain; its full sequence is Putative septation protein SpoVG (96 aa).

Belongs to the SpoVG family.

Functionally, essential for sporulation. Interferes with or is a negative regulator of the pathway leading to asymmetric septation. In Priestia megaterium (Bacillus megaterium), this protein is Putative septation protein SpoVG.